A 710-amino-acid chain; its full sequence is Gastrulation-defective protein 3 (710 aa).

Residues 597 to 615 (AYYVFTVLALIISNFPTIV) traverse the membrane as a helical segment.

The protein resides in the membrane. The sequence is that of Gastrulation-defective protein 3 (gadr-3) from Caenorhabditis elegans.